Consider the following 393-residue polypeptide: PPE family protein PPE26 (393 aa).

This sequence belongs to the mycobacterial PPE family. Interacts with human TLR2.

In terms of biological role, probably plays a key role in regulating innate and adaptive immune responses through human Toll-like receptor 2 (TLR2). Interacts with TLR2, leading to the subsequent activation of the mitogen-activated protein kinase (MAPK) and nuclear factor kappa B (NF-kappa-B) signaling pathways. Stimulates macrophage activation by augmenting pro-inflammatory cytokine production (TNF-alpha, IL-6 and IL-12p40) and the expression of cell surface molecules (CD80, CD86, MHC class I and II). Also participates in adaptive immunity by directing Th1-polarised immune responses. In Mycobacterium tuberculosis (strain ATCC 25618 / H37Rv), this protein is PPE family protein PPE26.